We begin with the raw amino-acid sequence, 1240 residues long: DNA polymerase catalytic subunit (1240 aa).

Residues 1–22 (MFCAAGGPASPGGKPAARAASG) show a composition bias toward low complexity. 3 disordered regions span residues 1–44 (MFCA…RRQN), 646–695 (GLDK…RETG), and 1103–1139 (AAAPGDEPAPPAALPSPAKRPRETPSHADPPGGASKP). Positions 669–688 (NGDEDKDDDEDGDEDGDERE) are enriched in acidic residues.

It belongs to the DNA polymerase type-B family. In terms of assembly, forms a complex with the ssDNA-binding protein UL29, the DNA polymerase processivity factor, and the alkaline exonuclease. Interacts with the putative helicase-primase complex subunit UL8; this interaction may coordinate leading and lagging strand DNA synthesis at the replication fork.

The protein localises to the host nucleus. The enzyme catalyses DNA(n) + a 2'-deoxyribonucleoside 5'-triphosphate = DNA(n+1) + diphosphate. It carries out the reaction Endonucleolytic cleavage to 5'-phosphomonoester.. Its function is as follows. Replicates viral genomic DNA. The replication complex is composed of six viral proteins: the DNA polymerase, processivity factor, primase, primase-associated factor, helicase, and ssDNA-binding protein. Additionally, the polymerase contains an intrinsic ribonuclease H (RNase H) activity that specifically degrades RNA/DNA heteroduplexes or duplex DNA substrates in the 5' to 3' direction. Therefore, it can catalyze the excision of the RNA primers that initiate the synthesis of Okazaki fragments at a replication fork during viral DNA replication. This is DNA polymerase catalytic subunit from Human herpesvirus 2 (strain HG52) (HHV-2).